The following is a 367-amino-acid chain: Dihydroorotate dehydrogenase (quinone) (367 aa).

FMN-binding positions include 67–71 (AGFDK) and threonine 91. Lysine 71 provides a ligand contact to substrate. Position 116–120 (116–120 (NRLGF)) interacts with substrate. The FMN site is built by asparagine 145 and asparagine 178. Asparagine 178 contributes to the substrate binding site. Serine 181 acts as the Nucleophile in catalysis. Asparagine 183 is a substrate binding site. FMN contacts are provided by lysine 219 and threonine 247. 248–249 (NT) contributes to the substrate binding site. FMN-binding positions include glycine 269, glycine 298, and 319–320 (YT).

Belongs to the dihydroorotate dehydrogenase family. Type 2 subfamily. Monomer. The cofactor is FMN.

The protein localises to the cell membrane. The enzyme catalyses (S)-dihydroorotate + a quinone = orotate + a quinol. It functions in the pathway pyrimidine metabolism; UMP biosynthesis via de novo pathway; orotate from (S)-dihydroorotate (quinone route): step 1/1. Its function is as follows. Catalyzes the conversion of dihydroorotate to orotate with quinone as electron acceptor. The sequence is that of Dihydroorotate dehydrogenase (quinone) from Roseiflexus castenholzii (strain DSM 13941 / HLO8).